We begin with the raw amino-acid sequence, 230 residues long: Orotidine 5'-phosphate decarboxylase (230 aa).

Residues aspartate 10, lysine 32, 59-68, threonine 116, arginine 177, glutamine 186, glycine 206, and arginine 207 each bind substrate; that span reads DLKFHDIPRT. The Proton donor role is filled by lysine 61.

Belongs to the OMP decarboxylase family. Type 1 subfamily. As to quaternary structure, homodimer.

It carries out the reaction orotidine 5'-phosphate + H(+) = UMP + CO2. The protein operates within pyrimidine metabolism; UMP biosynthesis via de novo pathway; UMP from orotate: step 2/2. In terms of biological role, catalyzes the decarboxylation of orotidine 5'-monophosphate (OMP) to uridine 5'-monophosphate (UMP). This is Orotidine 5'-phosphate decarboxylase from Methylacidiphilum infernorum (isolate V4) (Methylokorus infernorum (strain V4)).